A 108-amino-acid chain; its full sequence is MRTLVASLCVFAVFSAVCCDVQERGHTYRTRNVTVEDGACVFERNVIPDGETKALNSPCVLSTCYAAAREVNSTLCPNIGVEQGCRVEWTPVGEYPNCCPKHVCPTTS.

A signal peptide spans 1-19 (MRTLVASLCVFAVFSAVCC). Disulfide bonds link Cys-40-Cys-64, Cys-59-Cys-98, Cys-76-Cys-99, and Cys-85-Cys-104.

Belongs to the CirpT family. As to expression, expressed in salivary glands.

It is found in the secreted. In terms of biological role, complement inhibitor. Prevents complement-mediated activation of C5 by sterically preventing direct binding of C5 to its convertase (binding with domains MG4 and MG5). Binds C5 at a different binding site than the other tick complement inhibitors OmCI and RaCI3, and the drug eculizumab. Inhibits the complement in human, rat and guinea pig, and also shows a reduced inhibition in rabbit and pig. This is Complement inhibitor CirpT2 from Dermacentor andersoni (Rocky mountain wood tick).